A 162-amino-acid polypeptide reads, in one-letter code: MRLALVAVGRLKRGPERELVETYRERADALARGLGFSAVQVTELAESRARRAPDRCAEEGAAILDAVPPGSALVVMDEGGRPVTSLALAEQVGAWRDGGRPGLAIVIGGADGLCESVKRRADLLFAFGAATLPHGLVRVLVLEQLYRVMTILAGHPYHRGAP.

S-adenosyl-L-methionine is bound at residue G108.

This sequence belongs to the RNA methyltransferase RlmH family. As to quaternary structure, homodimer.

The protein localises to the cytoplasm. The enzyme catalyses pseudouridine(1915) in 23S rRNA + S-adenosyl-L-methionine = N(3)-methylpseudouridine(1915) in 23S rRNA + S-adenosyl-L-homocysteine + H(+). Its function is as follows. Specifically methylates the pseudouridine at position 1915 (m3Psi1915) in 23S rRNA. The protein is Ribosomal RNA large subunit methyltransferase H of Methylobacterium nodulans (strain LMG 21967 / CNCM I-2342 / ORS 2060).